A 41-amino-acid polypeptide reads, in one-letter code: Large ribosomal subunit protein bL36 (41 aa).

This sequence belongs to the bacterial ribosomal protein bL36 family.

The sequence is that of Large ribosomal subunit protein bL36 from Rickettsia prowazekii (strain Madrid E).